The primary structure comprises 106 residues: Movement protein TGB2 (106 aa).

Residues 1 to 8 (MPLTPPPD) are Cytoplasmic-facing. A helical transmembrane segment spans residues 9–29 (YTRVYTALAIGASIAFFTGLI). The Lumenal portion of the chain corresponds to 30–73 (TRNTLPSVGDLQHNLPHGGRYRDGTKSVEYCGPRKLNSVESGSR). The helical transmembrane segment at 74 to 94 (WTFQPWLLVIVLVALIIALGR) threads the bilayer. The Cytoplasmic portion of the chain corresponds to 95 to 106 (QGHNCRACGRSH).

Belongs to the Tymovirales TGBp2 protein family.

It is found in the host endoplasmic reticulum membrane. Functionally, plays a role in viral cell-to-cell propagation, by facilitating genome transport to neighboring plant cells through plasmosdesmata,. The protein is Movement protein TGB2 of Lilium (LSV).